Here is a 498-residue protein sequence, read N- to C-terminus: Glycerol kinase (498 aa).

T11 provides a ligand contact to ADP. Residues T11, S12, and S13 each contribute to the ATP site. Residue T11 coordinates sn-glycerol 3-phosphate. R15 serves as a coordination point for ADP. Residues R81, E82, Y133, and D242 each contribute to the sn-glycerol 3-phosphate site. 5 residues coordinate glycerol: R81, E82, Y133, D242, and Q243. ADP is bound by residues T264 and G307. Residues T264, G307, Q311, and G408 each coordinate ATP. The ADP site is built by G408 and N412.

The protein belongs to the FGGY kinase family.

It catalyses the reaction glycerol + ATP = sn-glycerol 3-phosphate + ADP + H(+). The protein operates within polyol metabolism; glycerol degradation via glycerol kinase pathway; sn-glycerol 3-phosphate from glycerol: step 1/1. Its activity is regulated as follows. Inhibited by fructose 1,6-bisphosphate (FBP). In terms of biological role, key enzyme in the regulation of glycerol uptake and metabolism. Catalyzes the phosphorylation of glycerol to yield sn-glycerol 3-phosphate. The chain is Glycerol kinase from Ralstonia nicotianae (strain ATCC BAA-1114 / GMI1000) (Ralstonia solanacearum).